A 163-amino-acid chain; its full sequence is MRVGLYPGTFDPVTNGHLDIIGRAVKLVDKLVIGVAINIGKGPLFSLEERVEILERETAHLKKIAEIEVRPFDSLLMHFARDVNAQMIVRGLRAVADFEYEFQMTAMNQQLDREIETVFLMADPRHQAIASRLVKEIATLGGDIGKFVPPGVAQQLLAKVGKG.

Residue Thr-9 participates in substrate binding. Residues 9–10 (TF) and His-17 each bind ATP. Substrate-binding residues include Lys-41, Leu-76, and Arg-90. Residues 91-93 (GLR), Glu-101, and 126-132 (HQAIASR) each bind ATP.

It belongs to the bacterial CoaD family. In terms of assembly, homohexamer. Mg(2+) serves as cofactor.

Its subcellular location is the cytoplasm. It carries out the reaction (R)-4'-phosphopantetheine + ATP + H(+) = 3'-dephospho-CoA + diphosphate. It participates in cofactor biosynthesis; coenzyme A biosynthesis; CoA from (R)-pantothenate: step 4/5. In terms of biological role, reversibly transfers an adenylyl group from ATP to 4'-phosphopantetheine, yielding dephospho-CoA (dPCoA) and pyrophosphate. This chain is Phosphopantetheine adenylyltransferase, found in Caulobacter vibrioides (strain ATCC 19089 / CIP 103742 / CB 15) (Caulobacter crescentus).